Here is a 188-residue protein sequence, read N- to C-terminus: MSRLRIFDDHTPDTPFFVSKEQTQITAELHKIGITFERWEATQAIEPGATPEQVMAAYRADIDRLIATHGFKTVDVVSIAPDNPKREEMRAKFLEEHFHKEDEVRFFVAGSGLFTVHSGNKVYEIECVKNDLIAIPDGTQHWFDMGAAPYFVAIRFFTEPDGWVGHFTGTDIAQRFPRYIPEGCQSAH.

Fe(2+)-binding residues include H97, H99, E103, and H141. Ni(2+) contacts are provided by H97, H99, E103, and H141.

It belongs to the acireductone dioxygenase (ARD) family. In terms of assembly, monomer. It depends on Fe(2+) as a cofactor. Ni(2+) serves as cofactor.

It carries out the reaction 1,2-dihydroxy-5-(methylsulfanyl)pent-1-en-3-one + O2 = 3-(methylsulfanyl)propanoate + CO + formate + 2 H(+). The catalysed reaction is 1,2-dihydroxy-5-(methylsulfanyl)pent-1-en-3-one + O2 = 4-methylsulfanyl-2-oxobutanoate + formate + 2 H(+). Its pathway is amino-acid biosynthesis; L-methionine biosynthesis via salvage pathway; L-methionine from S-methyl-5-thio-alpha-D-ribose 1-phosphate: step 5/6. Catalyzes 2 different reactions between oxygen and the acireductone 1,2-dihydroxy-3-keto-5-methylthiopentene (DHK-MTPene) depending upon the metal bound in the active site. Fe-containing acireductone dioxygenase (Fe-ARD) produces formate and 2-keto-4-methylthiobutyrate (KMTB), the alpha-ketoacid precursor of methionine in the methionine recycle pathway. Ni-containing acireductone dioxygenase (Ni-ARD) produces methylthiopropionate, carbon monoxide and formate, and does not lie on the methionine recycle pathway. The polypeptide is Acireductone dioxygenase (Xylella fastidiosa (strain 9a5c)).